We begin with the raw amino-acid sequence, 746 residues long: Alpha-1,4-glucan:maltose-1-phosphate maltosyltransferase (746 aa).

The disordered stretch occupies residues 1–43; sequence MAAVQHRATTRTSNTDNSTTKTKSKATSARKSPATKRKRVSAE. Positions 10–32 are enriched in low complexity; sequence TRTSNTDNSTTKTKSKATSARKS. Alpha-maltose 1-phosphate-binding residues include Lys-343, Gln-403, and Asp-438. The active-site Nucleophile is the Asp-473. Asn-474 lines the alpha-maltose 1-phosphate pocket. Glu-502 serves as the catalytic Proton donor. 612–613 contributes to the alpha-maltose 1-phosphate binding site; the sequence is KY.

The protein belongs to the glycosyl hydrolase 13 family. GlgE subfamily. Homodimer.

The catalysed reaction is alpha-maltose 1-phosphate + [(1-&gt;4)-alpha-D-glucosyl](n) = [(1-&gt;4)-alpha-D-glucosyl](n+2) + phosphate. Its function is as follows. Maltosyltransferase that uses maltose 1-phosphate (M1P) as the sugar donor to elongate linear or branched alpha-(1-&gt;4)-glucans. Is involved in a branched alpha-glucan biosynthetic pathway from trehalose, together with TreS, Mak and GlgB. This chain is Alpha-1,4-glucan:maltose-1-phosphate maltosyltransferase, found in Bifidobacterium longum (strain NCC 2705).